The primary structure comprises 314 residues: Acetaldehyde dehydrogenase 2 (314 aa).

Residue 15-18 (SGNI) participates in NAD(+) binding. Residue C133 is the Acyl-thioester intermediate of the active site. Residues 164 to 172 (SAGPGTRQN) and N289 each bind NAD(+).

It belongs to the acetaldehyde dehydrogenase family.

The enzyme catalyses acetaldehyde + NAD(+) + CoA = acetyl-CoA + NADH + H(+). In Nocardioides sp. (strain ATCC BAA-499 / JS614), this protein is Acetaldehyde dehydrogenase 2.